Here is a 227-residue protein sequence, read N- to C-terminus: Cytidylate kinase (227 aa).

12 to 20 (GPSGAGKGT) is an ATP binding site.

This sequence belongs to the cytidylate kinase family. Type 1 subfamily.

It localises to the cytoplasm. It carries out the reaction CMP + ATP = CDP + ADP. It catalyses the reaction dCMP + ATP = dCDP + ADP. This Citrobacter koseri (strain ATCC BAA-895 / CDC 4225-83 / SGSC4696) protein is Cytidylate kinase.